The chain runs to 68 residues: Peptide Smp13 (68 aa).

Positions 1–23 (MKTQFAIFLITLVLFQMFSQSDA) are cleaved as a signal peptide. Phe-36 is modified (phenylalanine amide). Positions 37-68 (GKRGLGDHDDLDELFDGEISQADIDFLKEIMQ) are excised as a propeptide.

It belongs to the non-disulfide-bridged peptide (NDBP) superfamily. Short antimicrobial peptide (group 4) family. Expressed by the venom gland.

The protein localises to the secreted. In terms of biological role, peptide with unknown function. Does not show antimicrobial activity against the Gram-positive, and Gram-negative bacteria tested, as well as against the fungus C.albicans. The polypeptide is Peptide Smp13 (Scorpio palmatus (Israeli golden scorpion)).